A 157-amino-acid chain; its full sequence is Large ribosomal subunit protein uL15 (157 aa).

The protein belongs to the universal ribosomal protein uL15 family. As to quaternary structure, part of the 50S ribosomal subunit.

Functionally, binds to the 23S rRNA. The chain is Large ribosomal subunit protein uL15 from Ehrlichia ruminantium (strain Gardel).